Reading from the N-terminus, the 194-residue chain is uncharacterized protein (194 aa).

This is an uncharacterized protein from Gallus gallus (Chicken).